Consider the following 583-residue polypeptide: Proline--tRNA ligase (583 aa).

Belongs to the class-II aminoacyl-tRNA synthetase family. ProS type 1 subfamily. In terms of assembly, homodimer.

The protein resides in the cytoplasm. It catalyses the reaction tRNA(Pro) + L-proline + ATP = L-prolyl-tRNA(Pro) + AMP + diphosphate. Functionally, catalyzes the attachment of proline to tRNA(Pro) in a two-step reaction: proline is first activated by ATP to form Pro-AMP and then transferred to the acceptor end of tRNA(Pro). As ProRS can inadvertently accommodate and process non-cognate amino acids such as alanine and cysteine, to avoid such errors it has two additional distinct editing activities against alanine. One activity is designated as 'pretransfer' editing and involves the tRNA(Pro)-independent hydrolysis of activated Ala-AMP. The other activity is designated 'posttransfer' editing and involves deacylation of mischarged Ala-tRNA(Pro). The misacylated Cys-tRNA(Pro) is not edited by ProRS. In Acidothermus cellulolyticus (strain ATCC 43068 / DSM 8971 / 11B), this protein is Proline--tRNA ligase.